We begin with the raw amino-acid sequence, 582 residues long: PX domain-containing protein kinase-like protein (582 aa).

A PX domain is found at 14-126 (LDDTVPLTAA…KFLDPNNYSA (113 aa)). Positions 88-481 (FIAERQRGLQ…VENSEEQPVK (394 aa)) constitute a Protein kinase domain. The segment at 433–550 (EQKQIHQHRR…APFLPQPVNG (118 aa)) is disordered. Basic residues-rich tracts occupy residues 437-448 (IHQHRRLTRAQS) and 457-469 (KRRK…KSKR). Positions 483–514 (SNSNNSAGSGASSPLTSPSSPTPPSTAGLSSA) are enriched in low complexity. Residues 515 to 531 (LPPPPPPPPPPPPPAGP) are compositionally biased toward pro residues. Positions 548 to 567 (VNGVNRGALLSSIQNFQKGT) constitute a WH2 domain.

This sequence belongs to the protein kinase superfamily. In terms of tissue distribution, isoform 1 is present in all tissues examined. Isoform 2 is found in all tissues except skeletal muscle and very low levels in spleen. Both isoforms are widely expressed throughout the nervous system however levels of isoform 2 are higher in purified hippocampal and cortical neurons whereas glial cells express more isoform 1 than isoform 2.

Its subcellular location is the cytoplasm. It localises to the cell membrane. Its function is as follows. Binds to and modulates brain Na,K-ATPase subunits ATP1B1 and ATP1B3 and may thereby participate in the regulation of electrical excitability and synaptic transmission. May not display kinase activity. The protein is PX domain-containing protein kinase-like protein of Mus musculus (Mouse).